The sequence spans 329 residues: Acrosin (329 aa).

The signal sequence occupies residues 1–17 (MLPTAVLLVLAVSVVAR). The N-linked (GlcNAc...) asparagine glycan is linked to N19. 6 disulfide bridges follow: C22–C152, C26–C160, C71–C87, C175–C244, C207–C223, and C234–C264. The 249-residue stretch at 40–288 (IIGGQDAAHG…YLNWIASKIG (249 aa)) folds into the Peptidase S1 domain. Active-site charge relay system residues include H86 and D140. N208 is a glycosylation site (N-linked (GlcNAc...) asparagine). The active-site Charge relay system is S238.

It belongs to the peptidase S1 family. Heavy chain (catalytic) and a light chain linked by two disulfide bonds. Forms a heterodimer with SERPINA5.

It carries out the reaction Preferential cleavage: Arg-|-Xaa, Lys-|-Xaa.. Its activity is regulated as follows. Inhibited by SERPINA5. Its function is as follows. Acrosin is the major protease of mammalian spermatozoa. It is a serine protease of trypsin-like cleavage specificity, it is synthesized in a zymogen form, proacrosin and stored in the acrosome. The protein is Acrosin (ACR) of Ovis aries (Sheep).